Reading from the N-terminus, the 330-residue chain is Protein pelota homolog (330 aa).

It belongs to the eukaryotic release factor 1 family. Pelota subfamily. In terms of assembly, monomer. The cofactor is a divalent metal cation.

The protein resides in the cytoplasm. In terms of biological role, may function in recognizing stalled ribosomes, interact with stem-loop structures in stalled mRNA molecules, and effect endonucleolytic cleavage of the mRNA. May play a role in the release non-functional ribosomes and degradation of damaged mRNAs. Has endoribonuclease activity. The polypeptide is Protein pelota homolog (Pyrobaculum islandicum (strain DSM 4184 / JCM 9189 / GEO3)).